Reading from the N-terminus, the 326-residue chain is Diphthine methyltransferase (326 aa).

4 WD repeats span residues M65–F105, D113–K152, E155–W195, and E293–I326.

It belongs to the DPH7 family.

The protein resides in the cytoplasm. The protein localises to the nucleus. It carries out the reaction diphthine methyl ester-[translation elongation factor 2] + H2O = diphthine-[translation elongation factor 2] + methanol + H(+). Its pathway is protein modification; peptidyl-diphthamide biosynthesis. Functionally, catalyzes the demethylation of diphthine methyl ester to form diphthine, an intermediate in diphthamide biosynthesis, a post-translational modification of histidine which occurs in translation elongation factor 2 (eft201 and eft202). The sequence is that of Diphthine methyltransferase (rrt2) from Schizosaccharomyces pombe (strain 972 / ATCC 24843) (Fission yeast).